Reading from the N-terminus, the 354-residue chain is Biotin synthase (354 aa).

The region spanning 41–268 (NEVQISRLLS…LSRVRLSAGR (228 aa)) is the Radical SAM core domain. Positions 56, 60, and 63 each coordinate [4Fe-4S] cluster. [2Fe-2S] cluster contacts are provided by Cys-100, Cys-131, Cys-191, and Arg-263.

It belongs to the radical SAM superfamily. Biotin synthase family. As to quaternary structure, homodimer. [4Fe-4S] cluster is required as a cofactor. It depends on [2Fe-2S] cluster as a cofactor.

It catalyses the reaction (4R,5S)-dethiobiotin + (sulfur carrier)-SH + 2 reduced [2Fe-2S]-[ferredoxin] + 2 S-adenosyl-L-methionine = (sulfur carrier)-H + biotin + 2 5'-deoxyadenosine + 2 L-methionine + 2 oxidized [2Fe-2S]-[ferredoxin]. The protein operates within cofactor biosynthesis; biotin biosynthesis; biotin from 7,8-diaminononanoate: step 2/2. In terms of biological role, catalyzes the conversion of dethiobiotin (DTB) to biotin by the insertion of a sulfur atom into dethiobiotin via a radical-based mechanism. The sequence is that of Biotin synthase from Shewanella amazonensis (strain ATCC BAA-1098 / SB2B).